A 143-amino-acid polypeptide reads, in one-letter code: Photosystem II extrinsic protein U (143 aa).

The N-terminal stretch at Met-1–Ala-29 is a signal peptide. The propeptide occupies Ala-30 to Ala-44.

This sequence belongs to the PsbU family. PSII is composed of 1 copy each of membrane proteins PsbA, PsbB, PsbC, PsbD, PsbE, PsbF, PsbH, PsbI, PsbJ, PsbK, PsbL, PsbM, PsbT, PsbX, PsbY, PsbZ, Psb30/Ycf12, peripheral proteins PsbO, CyanoQ (PsbQ), PsbU, PsbV and a large number of cofactors. It forms dimeric complexes.

It localises to the cellular thylakoid membrane. In terms of biological role, one of the extrinsic, lumenal subunits of photosystem II (PSII). PSII is a light-driven water plastoquinone oxidoreductase, using light energy to abstract electrons from H(2)O, generating a proton gradient subsequently used for ATP formation. The extrinsic proteins stabilize the structure of photosystem II oxygen-evolving complex (OEC), the ion environment of oxygen evolution and protect the OEC against heat-induced inactivation. The polypeptide is Photosystem II extrinsic protein U (Leptolyngbya laminosa (Phormidium laminosum)).